Consider the following 233-residue polypeptide: Outer membrane protein MIP (233 aa).

Positions 1-20 are cleaved as a signal peptide; that stretch reads MKMKLVTAAVMGLAMSTAMA. A PPIase FKBP-type domain is found at 144 to 233; sequence SDTVTVEYTG…IHLISVKKSS (90 aa).

It belongs to the FKBP-type PPIase family.

It localises to the cell outer membrane. It carries out the reaction [protein]-peptidylproline (omega=180) = [protein]-peptidylproline (omega=0). Strongly inhibited by FK506 but is completely resistant to cyclosporin A. Functionally, essential virulence factor associated with macrophage infectivity. Exhibits PPIase activity. In Legionella pneumophila subsp. pneumophila (strain Philadelphia 1 / ATCC 33152 / DSM 7513), this protein is Outer membrane protein MIP (mip).